We begin with the raw amino-acid sequence, 725 residues long: MSKGMETVTSLVSGPPNNLKKGGNRNVPVAGISGTIRPYSSIVSGSSASGSAPVRVSAPGPQAVRPVSRPFTAPHTLHFSKGCWNIVTFNSSDAETNRLVDLCITDVIKDHALTAKVDNMRFELDENDLKKLSAPVREKLSNIGIIDPANSDSAELSGLVVVKTKLDSVIYPNTMFLPGGVGFLASLPDVSGYFAEVLERMPVQTLNSSLYYERTWIDGMFEKFGKNFASNEHGKRNKTLTSVLRDITTLADQGVTVACPIHSDVMLRSLSPSDPVYYAKGDQGCFKSHRMVFTKAPVSKCGICSTLKMALASSMNVDWRSQVNIHPARLMSTAYRYVATVAIAHYGKNRLAESNIRSTDHATVVNMIVDMVSKSTELTALGVTVANVNVRSRYRRAIMIPVGESYHICVTAITTLLARCFGELNEWGYLGVDLISQNGRVQIRTGLDVVNCSLVAGVPVTKKWNTASTMDNILEMKTITYPIYNDAVVETFETLLAQQFEREINAAVARDDCVNIKKNGEDERYNFKAKSPEIIYRSIRQMVKAGTSMTKMMGEAIERLVSSERTEGMRSVNSIAISIIVKMRMEKSKDKSKTQITSGEEKKLPPLFLITPQYEINLAEIRKAVERSSKDFVPIKMEKTAEETSKDIENHVLKSLNAQASMSWADEVEMFDNEENQKQELDAKSDDVEESSVEGEEDDDGSSASEETDTYSNDNAAAASPTKDE.

Disordered regions lie at residues Met1 to Asn26 and Asp666 to Glu725. Polar residues predominate over residues Thr7–Pro16. Residues Glu675–Asp686 show a composition bias toward basic and acidic residues. Over residues Asp687–Asp709 the composition is skewed to acidic residues.

In Rice gall dwarf virus (RGDV), this protein is Non-structural protein 4.